Here is a 115-residue protein sequence, read N- to C-terminus: Large ribosomal subunit protein P2 (115 aa).

Residue methionine 1 is modified to N-acetylmethionine. A phosphoserine mark is found at serine 17 and serine 19. Lysine 21 carries the post-translational modification N6-acetyllysine; alternate. An N6-succinyllysine; alternate modification is found at lysine 21. The segment covering 78-90 (GSAAPAAGSAPAA) has biased composition (low complexity). The tract at residues 78–115 (GSAAPAAGSAPAAAEEKKDEKKEESEESDDDMGFGLFD) is disordered. 2 positions are modified to phosphoserine: serine 79 and serine 86. The span at 91 to 101 (AEEKKDEKKEE) shows a compositional bias: basic and acidic residues. A phosphoserine mark is found at serine 102 and serine 105.

Belongs to the eukaryotic ribosomal protein P1/P2 family. In terms of assembly, heterodimer with P1 at the lateral ribosomal stalk of the large ribosomal subunit.

Plays an important role in the elongation step of protein synthesis. The protein is Large ribosomal subunit protein P2 (RPLP2) of Homo sapiens (Human).